The primary structure comprises 673 residues: Synaptotagmin-like protein 4 (673 aa).

Positions 4-122 constitute a RabBD domain; the sequence is ILDLSFLSEM…KATGDWFYDQ (119 aa). The FYVE-type zinc finger occupies 63-105; sequence CARCQEGLGRLIPKSSTCVGCNHLVCRECRVLESNGSWRCKVC. Residues 184 to 253 form a disordered region; it reads FEVPKTRSGK…PGNQNAVCGD (70 aa). Phosphoserine is present on residues Ser-202, Ser-205, Ser-218, Ser-222, and Ser-275. A C2 1 domain is found at 358-480; that stretch reads VTGKIAFSLK…KLDKKLDHCL (123 aa). Ser-490 bears the Phosphoserine mark. The C2 2 domain occupies 509–635; sequence PASKLPVGGD…ISNGEVVDWM (127 aa).

As to quaternary structure, part of a ternary complex containing STX1A and RAB27A. Can bind both dominant negative and dominant active mutants of RAB27A. Binds STXBP1, RAB3A, RAB8A and RAB27B. Interacts with MYO5A. As to expression, detected in the pancreatic islet, in particular in insulin-positive beta cells, and in pituitary.

It is found in the membrane. It localises to the cytoplasmic vesicle. Its subcellular location is the secretory vesicle membrane. Functionally, modulates exocytosis of dense-core granules and secretion of hormones in the pancreas and the pituitary. Interacts with vesicles containing negatively charged phospholipids in a Ca(2+)-independent manner. This is Synaptotagmin-like protein 4 (Sytl4) from Mus musculus (Mouse).